A 133-amino-acid chain; its full sequence is Holo-[acyl-carrier-protein] synthase (133 aa).

D8 and E58 together coordinate Mg(2+).

This sequence belongs to the P-Pant transferase superfamily. AcpS family. It depends on Mg(2+) as a cofactor.

The protein localises to the cytoplasm. The catalysed reaction is apo-[ACP] + CoA = holo-[ACP] + adenosine 3',5'-bisphosphate + H(+). Transfers the 4'-phosphopantetheine moiety from coenzyme A to a Ser of acyl-carrier-protein. This is Holo-[acyl-carrier-protein] synthase from Erythrobacter litoralis (strain HTCC2594).